The chain runs to 343 residues: uncharacterized protein (343 aa).

This is an uncharacterized protein from Saccharolobus islandicus (Sulfolobus islandicus).